Consider the following 513-residue polypeptide: ATP synthase subunit alpha (513 aa).

169 to 176 (GDRQTGKT) provides a ligand contact to ATP.

The protein belongs to the ATPase alpha/beta chains family. As to quaternary structure, F-type ATPases have 2 components, CF(1) - the catalytic core - and CF(0) - the membrane proton channel. CF(1) has five subunits: alpha(3), beta(3), gamma(1), delta(1), epsilon(1). CF(0) has three main subunits: a(1), b(2) and c(9-12). The alpha and beta chains form an alternating ring which encloses part of the gamma chain. CF(1) is attached to CF(0) by a central stalk formed by the gamma and epsilon chains, while a peripheral stalk is formed by the delta and b chains.

Its subcellular location is the cell inner membrane. It catalyses the reaction ATP + H2O + 4 H(+)(in) = ADP + phosphate + 5 H(+)(out). In terms of biological role, produces ATP from ADP in the presence of a proton gradient across the membrane. The alpha chain is a regulatory subunit. The sequence is that of ATP synthase subunit alpha from Shewanella loihica (strain ATCC BAA-1088 / PV-4).